Reading from the N-terminus, the 197-residue chain is Beta-crystallin A2 (197 aa).

Residues 1–11 are N-terminal arm; the sequence is MSSASAPGPAP. 2 Beta/gamma crystallin 'Greek key' domains span residues 12 to 52 and 53 to 99; these read ACLT…KVEN and GAWV…RPVL. The connecting peptide stretch occupies residues 100-105; that stretch reads CANHSD. 2 consecutive Beta/gamma crystallin 'Greek key' domains span residues 106 to 147 and 148 to 196; these read SRVT…KVSS and GAWV…RRVQ.

This sequence belongs to the beta/gamma-crystallin family. In terms of assembly, homo/heterodimer, or complexes of higher-order. The structure of beta-crystallin oligomers seems to be stabilized through interactions between the N-terminal arms.

In terms of biological role, crystallins are the dominant structural components of the vertebrate eye lens. The protein is Beta-crystallin A2 (CRYBA2) of Oryctolagus cuniculus (Rabbit).